The chain runs to 134 residues: Arginine decarboxylase proenzyme (134 aa).

The Schiff-base intermediate with substrate; via pyruvic acid role is filled by Ser82. A Pyruvic acid (Ser); by autocatalysis modification is found at Ser82. His87 functions as the Proton acceptor; for processing activity in the catalytic mechanism. Cys102 (proton donor; for catalytic activity) is an active-site residue.

The protein belongs to the prokaryotic AdoMetDC family. Type 1 subfamily. Heterooctamer of four alpha and four beta chains arranged as a tetramer of alpha/beta heterodimers. The cofactor is pyruvate. Post-translationally, is synthesized initially as an inactive proenzyme. Formation of the active enzyme involves a self-maturation process in which the active site pyruvoyl group is generated from an internal serine residue via an autocatalytic post-translational modification. Two non-identical subunits are generated from the proenzyme in this reaction, and the pyruvate is formed at the N-terminus of the alpha chain, which is derived from the carboxyl end of the proenzyme. The post-translation cleavage follows an unusual pathway, termed non-hydrolytic serinolysis, in which the side chain hydroxyl group of the serine supplies its oxygen atom to form the C-terminus of the beta chain, while the remainder of the serine residue undergoes an oxidative deamination to produce ammonia and the pyruvoyl group blocking the N-terminus of the alpha chain.

It carries out the reaction L-arginine + H(+) = agmatine + CO2. Its pathway is amine and polyamine biosynthesis; agmatine biosynthesis; agmatine from L-arginine: step 1/1. Its function is as follows. Specifically catalyzes the decarboxylation of L-arginine to agmatine. Has no S-adenosylmethionine decarboxylase (AdoMetDC) activity. In Caldivirga maquilingensis (strain ATCC 700844 / DSM 13496 / JCM 10307 / IC-167), this protein is Arginine decarboxylase proenzyme.